The following is a 623-amino-acid chain: Glutamyl-tRNA(Gln) amidotransferase subunit E (623 aa).

The protein belongs to the GatB/GatE family. GatE subfamily. Heterodimer of GatD and GatE.

The catalysed reaction is L-glutamyl-tRNA(Gln) + L-glutamine + ATP + H2O = L-glutaminyl-tRNA(Gln) + L-glutamate + ADP + phosphate + H(+). Functionally, allows the formation of correctly charged Gln-tRNA(Gln) through the transamidation of misacylated Glu-tRNA(Gln) in organisms which lack glutaminyl-tRNA synthetase. The reaction takes place in the presence of glutamine and ATP through an activated gamma-phospho-Glu-tRNA(Gln). The GatDE system is specific for glutamate and does not act on aspartate. The sequence is that of Glutamyl-tRNA(Gln) amidotransferase subunit E from Haloarcula marismortui (strain ATCC 43049 / DSM 3752 / JCM 8966 / VKM B-1809) (Halobacterium marismortui).